We begin with the raw amino-acid sequence, 128 residues long: Small ribosomal subunit protein uS13 (128 aa).

The disordered stretch occupies residues 85–128 (GSYRGLRHRRSLPVRGQRTHTNARTRKGPRRGTVANKKKATGKT). The span at 89-128 (GLRHRRSLPVRGQRTHTNARTRKGPRRGTVANKKKATGKT) shows a compositional bias: basic residues.

It belongs to the universal ribosomal protein uS13 family. In terms of assembly, part of the 30S ribosomal subunit. Forms a loose heterodimer with protein S19. Forms two bridges to the 50S subunit in the 70S ribosome.

Its function is as follows. Located at the top of the head of the 30S subunit, it contacts several helices of the 16S rRNA. In the 70S ribosome it contacts the 23S rRNA (bridge B1a) and protein L5 of the 50S subunit (bridge B1b), connecting the 2 subunits; these bridges are implicated in subunit movement. Contacts the tRNAs in the A and P-sites. The chain is Small ribosomal subunit protein uS13 from Solibacter usitatus (strain Ellin6076).